The following is a 131-amino-acid chain: Sec-independent protein translocase protein TatB (131 aa).

Residues 2–22 traverse the membrane as a helical segment; it reads FANIGWGEMLVLVMVGLVVLG. The disordered stretch occupies residues 90–131; sequence DSLFTGDFDRPTPKKPDAAGSAGPDATEQIGAGPIPFDSDAT. Over residues 96 to 106 the composition is skewed to basic and acidic residues; that stretch reads DFDRPTPKKPD.

Belongs to the TatB family. The Tat system comprises two distinct complexes: a TatABC complex, containing multiple copies of TatA, TatB and TatC subunits, and a separate TatA complex, containing only TatA subunits. Substrates initially bind to the TatABC complex, which probably triggers association of the separate TatA complex to form the active translocon.

It is found in the cell membrane. Functionally, part of the twin-arginine translocation (Tat) system that transports large folded proteins containing a characteristic twin-arginine motif in their signal peptide across membranes. Together with TatC, TatB is part of a receptor directly interacting with Tat signal peptides. TatB may form an oligomeric binding site that transiently accommodates folded Tat precursor proteins before their translocation. This is Sec-independent protein translocase protein TatB from Mycobacterium bovis (strain ATCC BAA-935 / AF2122/97).